Reading from the N-terminus, the 398-residue chain is Aspartate aminotransferase (398 aa).

L-aspartate contacts are provided by Gly36, Trp132, and Asn185. Position 248 is an N6-(pyridoxal phosphate)lysine (Lys248). Arg376 contributes to the L-aspartate binding site.

Belongs to the class-I pyridoxal-phosphate-dependent aminotransferase family. Homodimer. Pyridoxal 5'-phosphate is required as a cofactor.

The protein localises to the cytoplasm. It catalyses the reaction L-aspartate + 2-oxoglutarate = oxaloacetate + L-glutamate. The polypeptide is Aspartate aminotransferase (aspC) (Pseudomonas aeruginosa (strain ATCC 15692 / DSM 22644 / CIP 104116 / JCM 14847 / LMG 12228 / 1C / PRS 101 / PAO1)).